Reading from the N-terminus, the 1039-residue chain is Protein male-specific lethal-1 (1039 aa).

Residues 1–13 (MDKRFKWPPKKRA) show a composition bias toward basic residues. Disordered regions lie at residues 1–44 (MDKR…HLHQ) and 171–199 (RRKN…QKLI). The residue at position 18 (Ser18) is a Phosphoserine. Ser238 carries the phosphoserine modification. Disordered stretches follow at residues 244–266 (HAGA…GEFN), 358–454 (GQSV…GNQN), 485–691 (KKDK…EIDV), and 729–799 (IYPP…SSTT). Residues 255 to 266 (KRSESKGRGEFN) show a composition bias toward basic and acidic residues. Residues 368 to 392 (EEDDDEDDEDDENSDKDDDSEEDDY) show a composition bias toward acidic residues. Basic and acidic residues predominate over residues 397-407 (SDADVNARTEE). Residues 431–445 (AHSTPNHQQKSSTQA) are compositionally biased toward polar residues. Ser433 bears the Phosphoserine mark. Thr434 carries the phosphothreonine modification. Residues Ser492 and Ser496 each carry the phosphoserine modification. Composition is skewed to basic and acidic residues over residues 504–515 (PHQEDAIVDHNA) and 523–570 (PKPD…DAPK). Composition is skewed to polar residues over residues 581-592 (TKTSSRESTLPK) and 609-625 (NHQS…TQRL). Ser585 carries the post-translational modification Phosphoserine. A Phosphothreonine modification is found at Thr659. A phosphoserine mark is found at Ser682 and Ser684. A Phosphothreonine modification is found at Thr747. Ser749 carries the post-translational modification Phosphoserine. 3 positions are modified to phosphothreonine: Thr750, Thr751, and Thr753. A compositionally biased stretch (polar residues) spans 759–768 (QHAVTSSMDQ). Phosphoserine is present on residues Ser764 and Ser765. The residue at position 788 (Thr788) is a Phosphothreonine. The residue at position 810 (Ser810) is a Phosphoserine. Phosphothreonine is present on residues Thr813 and Thr832. The region spanning 865–983 (SLEIPKWRDV…EARDDFGVPW (119 aa)) is the PEHE domain. Ser879 and Ser889 each carry phosphoserine. The interval 886–904 (ELLSDATFERRHQKYVKDE) is interaction with mof HAT domain. The tract at residues 1011–1039 (IPTTAAEARHQENHSSYVFPKRRKRQKNR) is disordered. Thr1014 is subject to Phosphothreonine. Ser1025 is modified (phosphoserine). The span at 1030–1039 (PKRRKRQKNR) shows a compositional bias: basic residues. Positions 1032–1037 (RRKRQK) match the Nuclear localization signal motif.

The protein belongs to the msl-1 family. As to quaternary structure, component of the male-specific lethal (MSL) histone acetyltransferase complex, composed of mof, mle, msl-1, msl-2 and msl-3 proteins, as well as roX1 and roX2 non-coding RNAs. Interacts (via PEHE domain) with mof (via HAT domain) and msl-3 (via MRG domain); both interactions are direct. Interacts with tamo via the nuclear localization signal. Component of a maternal MSL subcomplex composed of mof, msl-1 and msl-3. Phosphorylation at Ser-18, Thr743, Thr-747 and Thr-751 is required to promote phosphorylation of 'Ser-5' of the C-terminal heptapeptide repeat domain (CTD) of the largest RNA polymerase II subunit Polr2A. Phosphorylated by Cdk7 in vitro. In contrast, phosphorylation at Ser-18, Thr743, Thr-747 and Thr-751 does not affect its role in dosage compensation in males. Post-translationally, ubiquitinated by msl-2.

It is found in the nucleus. The protein localises to the chromosome. Functionally, component of the male-specific lethal (MSL) histone acetyltransferase complex, a multiprotein complex essential for elevating transcription of the single X chromosome in the male (X chromosome dosage compensation). The MSL complex specifically associates with the single X chromosome in males and mediates formation of H4K16ac, promoting a two-fold activation of X chromosome. In complex with msl-2, promotes ubiquitination of histone H2B. In addition to its role in dosage compensation in males, regulates the activity of gene promoters: acts together with Cdk7 to promote phosphorylation of 'Ser-5' of the C-terminal heptapeptide repeat domain (CTD) of the largest RNA polymerase II subunit Polr2A. This chain is Protein male-specific lethal-1, found in Drosophila melanogaster (Fruit fly).